The primary structure comprises 674 residues: Membrane-anchored lipid-binding protein LAM5 (674 aa).

Disordered regions lie at residues 1–52 (MSDV…LNTE) and 65–151 (NQSA…GSPL). Topologically, residues 1 to 633 (MSDVDNWEPV…AEQQGLKVTM (633 aa)) are cytoplasmic. The span at 69–81 (ADEHPTEIKHDQS) shows a compositional bias: basic and acidic residues. A compositionally biased stretch (low complexity) spans 82-119 (RTSSTSSFFSGMISSFKSNVPSPVSRSTTPTSPVSQPS). Threonine 110 carries the post-translational modification Phosphothreonine. Residues serine 113 and serine 140 each carry the phosphoserine modification. Threonine 143 bears the Phosphothreonine mark. A Phosphoserine modification is found at serine 149. In terms of domain architecture, GRAM spans 198–264 (KDFHETFKSV…FEDVTFMEKT (67 aa)). Residues 336–357 (IDEENNDKDANDNDTNENDDEN) show a composition bias toward acidic residues. The segment at 336-380 (IDEENNDKDANDNDTNENDDENISTNETTPNSTSSSPDKEKEKAY) is disordered. The span at 358 to 371 (ISTNETTPNSTSSS) shows a compositional bias: low complexity. The VASt domain maps to 409 to 582 (NEFVLKELPF…ILSKFIKNNV (174 aa)). Residues 634–654 (ETWLFLYLIVVVLLLFNLFYI) traverse the membrane as a helical segment. Topologically, residues 655-674 (RSIAVSLHQLVKLQLVELKL) are lumenal.

Belongs to the YSP2 family.

It is found in the endoplasmic reticulum membrane. In terms of biological role, may be involved in sterol transfer between intracellular membranes. In Saccharomyces cerevisiae (strain ATCC 204508 / S288c) (Baker's yeast), this protein is Membrane-anchored lipid-binding protein LAM5.